The chain runs to 468 residues: UDP-N-acetylmuramoylalanine--D-glutamate ligase (468 aa).

127–133 (GTNGKTT) provides a ligand contact to ATP.

This sequence belongs to the MurCDEF family.

It localises to the cytoplasm. It catalyses the reaction UDP-N-acetyl-alpha-D-muramoyl-L-alanine + D-glutamate + ATP = UDP-N-acetyl-alpha-D-muramoyl-L-alanyl-D-glutamate + ADP + phosphate + H(+). It functions in the pathway cell wall biogenesis; peptidoglycan biosynthesis. In terms of biological role, cell wall formation. Catalyzes the addition of glutamate to the nucleotide precursor UDP-N-acetylmuramoyl-L-alanine (UMA). This chain is UDP-N-acetylmuramoylalanine--D-glutamate ligase, found in Prochlorococcus marinus (strain MIT 9312).